Reading from the N-terminus, the 756-residue chain is Ent-kaurene synthase, chloroplastic (756 aa).

Residues D507 and D511 each contribute to the Mg(2+) site. The DDXXD motif motif lies at D507 to D511. A helical membrane pass occupies residues Y606–V622. Residues N651, T655, and E659 each coordinate Mg(2+).

This sequence belongs to the terpene synthase family. Mg(2+) serves as cofactor. As to expression, present in both leaves and flowers.

It localises to the plastid. The protein localises to the chloroplast membrane. It carries out the reaction ent-copalyl diphosphate = ent-kaur-16-ene + diphosphate. The protein operates within plant hormone biosynthesis; gibberellin biosynthesis. Its function is as follows. Involved in the biosynthesis of labdane-type diterpenoid including marrubiin and other labdane-related furanoid diterpenoids with potential applications as anti-diabetics, analgesics or vasorelaxants. Terpene synthase that produces ent-kaurene from ent-copalyl diphosphate (ent-CPP). The chain is Ent-kaurene synthase, chloroplastic from Marrubium vulgare (White horehound).